Reading from the N-terminus, the 120-residue chain is NAD(P)H-quinone oxidoreductase subunit 3, chloroplastic (120 aa).

Transmembrane regions (helical) follow at residues 9-29 (IFWA…FISG), 64-84 (MFAL…PWAM), and 88-108 (VLGV…IVGL).

This sequence belongs to the complex I subunit 3 family. As to quaternary structure, NDH is composed of at least 16 different subunits, 5 of which are encoded in the nucleus.

The protein localises to the plastid. The protein resides in the chloroplast thylakoid membrane. It carries out the reaction a plastoquinone + NADH + (n+1) H(+)(in) = a plastoquinol + NAD(+) + n H(+)(out). The enzyme catalyses a plastoquinone + NADPH + (n+1) H(+)(in) = a plastoquinol + NADP(+) + n H(+)(out). NDH shuttles electrons from NAD(P)H:plastoquinone, via FMN and iron-sulfur (Fe-S) centers, to quinones in the photosynthetic chain and possibly in a chloroplast respiratory chain. The immediate electron acceptor for the enzyme in this species is believed to be plastoquinone. Couples the redox reaction to proton translocation, and thus conserves the redox energy in a proton gradient. This is NAD(P)H-quinone oxidoreductase subunit 3, chloroplastic from Lactuca sativa (Garden lettuce).